The following is a 301-amino-acid chain: Growth-regulating factor 2 (301 aa).

Residues 11 to 46 (LFTATQWQELEHQALIYKYMAAGAPVPPDLLLHLRH) form the QLQ domain. 2 short sequence motifs (bipartite nuclear localization signal) span residues 83-102 (RRVE…KKWR) and 120-127 (RGKNRSRK). Residues 87–131 (DPEPGRCRRTDGKKWRCSREAYGESKYCEKHMHRGKNRSRKPVEM) enclose the WRC domain.

Belongs to the GRF family.

It localises to the nucleus. Functionally, transcription activator that plays a regulatory role in gibberellin-induced stem elongation. The chain is Growth-regulating factor 2 (GRF2) from Oryza sativa subsp. japonica (Rice).